Consider the following 231-residue polypeptide: NADH-ubiquinone oxidoreductase chain 4 (231 aa).

7 consecutive transmembrane segments (helical) span residues 1–21, 34–54, 63–85, 89–111, 128–148, 169–189, and 211–231; these read PIAG…YGII, MFLP…LTCL, IAYS…TPWG, AMAL…NTTY, ILPM…ATPP, TIIL…HMFL, and LLMT…ELVI.

This sequence belongs to the complex I subunit 4 family.

Its subcellular location is the mitochondrion membrane. It carries out the reaction a ubiquinone + NADH + 5 H(+)(in) = a ubiquinol + NAD(+) + 4 H(+)(out). Its function is as follows. Core subunit of the mitochondrial membrane respiratory chain NADH dehydrogenase (Complex I) that is believed to belong to the minimal assembly required for catalysis. Complex I functions in the transfer of electrons from NADH to the respiratory chain. The immediate electron acceptor for the enzyme is believed to be ubiquinone. The protein is NADH-ubiquinone oxidoreductase chain 4 (MT-ND4) of Porthidium ophryomegas (Slender hognose viper).